Consider the following 229-residue polypeptide: Putative N-acetylmannosamine-6-phosphate 2-epimerase (229 aa).

Belongs to the NanE family.

The catalysed reaction is an N-acyl-D-glucosamine 6-phosphate = an N-acyl-D-mannosamine 6-phosphate. It participates in amino-sugar metabolism; N-acetylneuraminate degradation; D-fructose 6-phosphate from N-acetylneuraminate: step 3/5. Functionally, converts N-acetylmannosamine-6-phosphate (ManNAc-6-P) to N-acetylglucosamine-6-phosphate (GlcNAc-6-P). The sequence is that of Putative N-acetylmannosamine-6-phosphate 2-epimerase from Shigella flexneri serotype 5b (strain 8401).